A 257-amino-acid chain; its full sequence is Phosphonates import ATP-binding protein PhnC 1 (257 aa).

The 245-residue stretch at 2–246 (IELKNVSKVY…VFKDIYGRPL (245 aa)) folds into the ABC transporter domain. Residue 35–42 (GLSGAGKS) coordinates ATP.

This sequence belongs to the ABC transporter superfamily. Phosphonates importer (TC 3.A.1.9.1) family. The complex is composed of two ATP-binding proteins (PhnC), two transmembrane proteins (PhnE) and a solute-binding protein (PhnD).

Its subcellular location is the cell membrane. It catalyses the reaction phosphonate(out) + ATP + H2O = phosphonate(in) + ADP + phosphate + H(+). In terms of biological role, part of the ABC transporter complex PhnCDE involved in phosphonates import. Responsible for energy coupling to the transport system. This chain is Phosphonates import ATP-binding protein PhnC 1, found in Halalkalibacterium halodurans (strain ATCC BAA-125 / DSM 18197 / FERM 7344 / JCM 9153 / C-125) (Bacillus halodurans).